A 313-amino-acid polypeptide reads, in one-letter code: MNSIALGFLVINKPAGLTSHDCVNRLRRIYGIKRIGHGGTLDPAVTGVLPIAIGKATRLLSFLPSPKTYEGTIKLGISTNTDDLTGETISEHSWDQVKENSILNCLNKFQGEIKQCPPIFSSVHINGERAYKKARRGEFFELPPKLIKIYRIKLINWNKKDGTIDLEVHCSPGTYIRSLARDIGKKLGCGGALAKLNRTMALGFNIDQAIELPDLDKNNDLNKPMIIDPLKALSHLPSIKLMTIDELSSWRKGKHLILSKSRLKNPLYLIEDDKDIPKTFLTVINNENHLIGLARWHHEPFKIEPKIVFNADG.

Residue Asp-42 is the Nucleophile of the active site.

The protein belongs to the pseudouridine synthase TruB family. Type 1 subfamily.

The enzyme catalyses uridine(55) in tRNA = pseudouridine(55) in tRNA. Its function is as follows. Responsible for synthesis of pseudouridine from uracil-55 in the psi GC loop of transfer RNAs. In Prochlorococcus marinus (strain SARG / CCMP1375 / SS120), this protein is tRNA pseudouridine synthase B.